The following is a 243-amino-acid chain: 1-(5-phosphoribosyl)-5-[(5-phosphoribosylamino)methylideneamino] imidazole-4-carboxamide isomerase (243 aa).

The Proton acceptor role is filled by D8. The active-site Proton donor is D129.

It belongs to the HisA/HisF family.

The protein localises to the cytoplasm. It catalyses the reaction 1-(5-phospho-beta-D-ribosyl)-5-[(5-phospho-beta-D-ribosylamino)methylideneamino]imidazole-4-carboxamide = 5-[(5-phospho-1-deoxy-D-ribulos-1-ylimino)methylamino]-1-(5-phospho-beta-D-ribosyl)imidazole-4-carboxamide. The protein operates within amino-acid biosynthesis; L-histidine biosynthesis; L-histidine from 5-phospho-alpha-D-ribose 1-diphosphate: step 4/9. The sequence is that of 1-(5-phosphoribosyl)-5-[(5-phosphoribosylamino)methylideneamino] imidazole-4-carboxamide isomerase from Nitratidesulfovibrio vulgaris (strain DSM 19637 / Miyazaki F) (Desulfovibrio vulgaris).